The sequence spans 28 residues: MTHIVRFIGLLLLNASSLRGRRVSGIQH.

Functionally, involved in control of the biosynthesis of leucine. The chain is leu operon leader peptide (leuL) from Shigella flexneri.